The following is a 154-amino-acid chain: 6,7-dimethyl-8-ribityllumazine synthase (154 aa).

5-amino-6-(D-ribitylamino)uracil is bound by residues tryptophan 22, alanine 56 to glutamate 58, and cysteine 80 to isoleucine 82. Residue aspartate 85–threonine 86 participates in (2S)-2-hydroxy-3-oxobutyl phosphate binding. Histidine 88 serves as the catalytic Proton donor. Asparagine 113 contributes to the 5-amino-6-(D-ribitylamino)uracil binding site. Arginine 127 contributes to the (2S)-2-hydroxy-3-oxobutyl phosphate binding site.

This sequence belongs to the DMRL synthase family. In terms of assembly, forms an icosahedral capsid composed of 60 subunits, arranged as a dodecamer of pentamers.

The enzyme catalyses (2S)-2-hydroxy-3-oxobutyl phosphate + 5-amino-6-(D-ribitylamino)uracil = 6,7-dimethyl-8-(1-D-ribityl)lumazine + phosphate + 2 H2O + H(+). It functions in the pathway cofactor biosynthesis; riboflavin biosynthesis; riboflavin from 2-hydroxy-3-oxobutyl phosphate and 5-amino-6-(D-ribitylamino)uracil: step 1/2. Its function is as follows. Catalyzes the formation of 6,7-dimethyl-8-ribityllumazine by condensation of 5-amino-6-(D-ribitylamino)uracil with 3,4-dihydroxy-2-butanone 4-phosphate. This is the penultimate step in the biosynthesis of riboflavin. The protein is 6,7-dimethyl-8-ribityllumazine synthase of Xanthomonas oryzae pv. oryzae (strain MAFF 311018).